The chain runs to 395 residues: Putative 8-amino-7-oxononanoate synthase (395 aa).

Residue Arg23 participates in substrate binding. 110 to 111 (GF) provides a ligand contact to pyridoxal 5'-phosphate. Residue His135 coordinates substrate. Residues Ser182, 207-210 (DEAH), and 239-242 (TFSK) contribute to the pyridoxal 5'-phosphate site. At Lys242 the chain carries N6-(pyridoxal phosphate)lysine. Residue Thr356 coordinates substrate.

Belongs to the class-II pyridoxal-phosphate-dependent aminotransferase family. BioF subfamily. Homodimer. Pyridoxal 5'-phosphate is required as a cofactor.

It carries out the reaction 6-carboxyhexanoyl-[ACP] + L-alanine + H(+) = (8S)-8-amino-7-oxononanoate + holo-[ACP] + CO2. It participates in cofactor biosynthesis; biotin biosynthesis. In terms of biological role, catalyzes the decarboxylative condensation of pimeloyl-[acyl-carrier protein] and L-alanine to produce 8-amino-7-oxononanoate (AON), [acyl-carrier protein], and carbon dioxide. The chain is Putative 8-amino-7-oxononanoate synthase (bioF) from Bacillus thuringiensis subsp. konkukian (strain 97-27).